A 330-amino-acid chain; its full sequence is Polyprenol dehydrogenase (330 aa).

NAD(+)-binding residues include isoleucine 55, tyrosine 208, lysine 212, and threonine 245. The active-site Proton acceptor is the tyrosine 208.

Belongs to the short-chain dehydrogenases/reductases (SDR) family. Widely expressed. Highly expressed in the pancreas.

Its subcellular location is the lipid droplet. The protein localises to the secreted. The catalysed reaction is a di-trans,poly-cis-polyprenol + NAD(+) = a di-trans,poly-cis-polyprenal + NADH + H(+). It carries out the reaction a di-trans,poly-cis-polyprenol + NADP(+) = a di-trans,poly-cis-polyprenal + NADPH + H(+). The enzyme catalyses a di-trans,poly-cis-dolichol + NADP(+) = a di-trans,poly-cis-dolichal + NADPH + H(+). It catalyses the reaction a di-trans,poly-cis-dolichol + NAD(+) = a di-trans,poly-cis-dolichal + NADH + H(+). It functions in the pathway protein modification; protein glycosylation. Its function is as follows. Oxidoreductase that plays a key role in early steps of protein N-linked glycosylation by mediating two non-consecutive steps in dolichol biosynthesis. Acts both as a NAD(+)-dependent dehydrogenase and as a NADPH-dependent reductase during the conversion of polyprenol into dolichol. First catalyzes the NAD(+)-dependent dehydrogenation of polyprenol into polyprenal; polyprenal is then reduced into dolichal by SRD5A3. It then catalyzes the NADPH-dependent reduction of dolichal into dolichol. May also acts as a positive regulator of starvation-induced autophagy. In Homo sapiens (Human), this protein is Polyprenol dehydrogenase.